Reading from the N-terminus, the 152-residue chain is MFKGASAINLDAKGRIAIPTRYREPLLSAHEGKLVITVDIQANCLLIYPADEWSLIEAKLLKLSDTQPTERALKRMLLGYAHEIEMDSNGRLLLPPPLRQYAQLDKKAMLVGQLNKFELWDEAQWQAQIQSAQDVIRSEDLAANERLADFSL.

2 consecutive SpoVT-AbrB domains span residues 5–52 (ASAI…PADE) and 81–124 (AHEI…DEAQ).

Belongs to the MraZ family. Forms oligomers.

It is found in the cytoplasm. Its subcellular location is the nucleoid. The chain is Transcriptional regulator MraZ from Shewanella amazonensis (strain ATCC BAA-1098 / SB2B).